The chain runs to 296 residues: Glycerol-3-phosphate dehydrogenase [NAD(P)+] (296 aa).

Residues W12, R31, and K80 each contribute to the NADPH site. Sn-glycerol 3-phosphate-binding residues include K80, G108, and S110. A112 contributes to the NADPH binding site. Residues K162, D215, S225, R226, and N227 each contribute to the sn-glycerol 3-phosphate site. K162 serves as the catalytic Proton acceptor. Position 226 (R226) interacts with NADPH. The NADPH site is built by V250 and E252.

Belongs to the NAD-dependent glycerol-3-phosphate dehydrogenase family.

Its subcellular location is the cytoplasm. The enzyme catalyses sn-glycerol 3-phosphate + NAD(+) = dihydroxyacetone phosphate + NADH + H(+). It catalyses the reaction sn-glycerol 3-phosphate + NADP(+) = dihydroxyacetone phosphate + NADPH + H(+). Its pathway is membrane lipid metabolism; glycerophospholipid metabolism. Its function is as follows. Catalyzes the reduction of the glycolytic intermediate dihydroxyacetone phosphate (DHAP) to sn-glycerol 3-phosphate (G3P), the key precursor for phospholipid synthesis. The polypeptide is Glycerol-3-phosphate dehydrogenase [NAD(P)+] (Sulfurimonas denitrificans (strain ATCC 33889 / DSM 1251) (Thiomicrospira denitrificans (strain ATCC 33889 / DSM 1251))).